A 512-amino-acid chain; its full sequence is MFQVPSAGEIQELIGALKTGASAFVPEIFLSGLFLLVVTIDLFRIPSKRTIIPAVSVIGLIISGYFVYLQHAIPPDEFFLGMYAVDPFAIFFKYLFIVSGVFAVLISIDSVEVNLPESRSLGEYYSLIVAMVLGMFLMASSTDLLMMFLSLEMVSIISYILVGYLKGQVRSSEAGLKYVIYGSVSSGLMIYGFSIIYGLTGETNIFAINEFLKHNEVDSITLMLGSLLILGGFGYKAGVVPFHFWSPDVYEGAPTPITAYLSVGSKAAGFAMLIRFFRVTIPTGAGSTDLLAFDWVTLLSVVSVVSMVLGNVVALWQSNVKRLLAYSSIAHAGYILLGVIVADDLGTQATLFYLAAYTIMNIGAFFVIILISNEIGSDDVNDYKGLGKKMPLAAASLTIFLVSLTGLPPTVGFIGKLMIFSALLAKGPVFVWLAVIGVLTSVVSLYFYFKIPLNMYLRESEDGSETEFNVGMLSNALVAFLMILTVVFGLYFTPLSVLAEESVKIIGAVVMN.

14 consecutive transmembrane segments (helical) span residues 23–43 (AFVP…IDLF), 50–70 (TIIP…VYLQ), 88–108 (FAIF…LISI), 120–140 (SLGE…LMAS), 144–164 (LLMM…LVGY), 179–199 (VIYG…IYGL), 220–240 (ITLM…AGVV), 254–274 (PTPI…AMLI), 295–315 (WVTL…VVAL), 323–343 (LLAY…IVAD), 351–371 (LFYL…IILI), 394–414 (AASL…VGFI), 429–449 (VFVW…YFYF), and 477–497 (LVAF…PLSV).

Belongs to the complex I subunit 2 family. As to quaternary structure, NDH-1 is composed of 14 different subunits. Subunits NuoA, H, J, K, L, M, N constitute the membrane sector of the complex.

The protein localises to the cell inner membrane. It catalyses the reaction a quinone + NADH + 5 H(+)(in) = a quinol + NAD(+) + 4 H(+)(out). In terms of biological role, NDH-1 shuttles electrons from NADH, via FMN and iron-sulfur (Fe-S) centers, to quinones in the respiratory chain. The immediate electron acceptor for the enzyme in this species is believed to be a menaquinone. Couples the redox reaction to proton translocation (for every two electrons transferred, four hydrogen ions are translocated across the cytoplasmic membrane), and thus conserves the redox energy in a proton gradient. This is NADH-quinone oxidoreductase subunit N 2 from Chloroherpeton thalassium (strain ATCC 35110 / GB-78).